A 587-amino-acid chain; its full sequence is General negative regulator of transcription subunit 4 (587 aa).

The RING-type zinc-finger motif lies at 33–78 (CPLCIEPMDITDKNFFPCPCGYQICQFCYNNIRQNPELNGRCPACR). The stretch at 94–128 (EELKMERAKLARKEKERKHREKERKENEYTNRKHL) forms a coiled coil. The region spanning 137 to 228 (NLVYVVGINP…YMDGRLIKAA (92 aa)) is the RRM domain. The C3H1-type zinc finger occupies 229-256 (YGTTKYCSSYLRGLPCPNPNCMFLHEPG). K270 is covalently cross-linked (Glycyl lysine isopeptide (Lys-Gly) (interchain with G-Cter in ubiquitin)). Phosphothreonine is present on T310. S312 carries the post-translational modification Phosphoserine. T326 bears the Phosphothreonine mark. S360 carries the post-translational modification Phosphoserine. The disordered stretch occupies residues 370-412 (TLNDSLGHHTTPTTENTITSTTTTTNTNATSHSHGSKKKQSLA). Over residues 377 to 402 (HHTTPTTENTITSTTTTTNTNATSHS) the composition is skewed to low complexity.

Forms a NOT protein complex that comprises NOT1, NOT2, NOT3, NOT4 and NOT5. Subunit of the 1.0 MDa CCR4-NOT core complex that contains CCR4, CAF1, NOT1, NOT2, NOT3, NOT4, NOT5, CAF40 and CAF130. In the complex interacts with NOT1. The core complex probably is part of a less characterized 1.9 MDa CCR4-NOT complex.

The protein localises to the cytoplasm. It localises to the nucleus. It catalyses the reaction S-ubiquitinyl-[E2 ubiquitin-conjugating enzyme]-L-cysteine + [acceptor protein]-L-lysine = [E2 ubiquitin-conjugating enzyme]-L-cysteine + N(6)-ubiquitinyl-[acceptor protein]-L-lysine.. It participates in protein modification; protein ubiquitination. E3 ubiquitin-protein ligase component of the CCR4-NOT core complex, which in the nucleus seems to be a general transcription factor, and in the cytoplasm the major mRNA deadenylase involved in mRNA turnover. The NOT protein subcomplex negatively regulates the basal and activated transcription of many genes. Preferentially affects TC-type TATA element-dependent transcription. Could directly or indirectly inhibit component(s) of the general transcription machinery. In the cytoplasm, catalyzes monoubiquitination of RPS7/es7 in response to stalled ribosomes, initiating a HEL2-dependent response that activates the No-Go Decay (NGD) pathway. The protein is General negative regulator of transcription subunit 4 (MOT2) of Saccharomyces cerevisiae (strain ATCC 204508 / S288c) (Baker's yeast).